A 172-amino-acid polypeptide reads, in one-letter code: Adenine phosphoribosyltransferase (172 aa).

Belongs to the purine/pyrimidine phosphoribosyltransferase family. In terms of assembly, homodimer.

It is found in the cytoplasm. The catalysed reaction is AMP + diphosphate = 5-phospho-alpha-D-ribose 1-diphosphate + adenine. It participates in purine metabolism; AMP biosynthesis via salvage pathway; AMP from adenine: step 1/1. Its function is as follows. Catalyzes a salvage reaction resulting in the formation of AMP, that is energically less costly than de novo synthesis. In Clostridium kluyveri (strain NBRC 12016), this protein is Adenine phosphoribosyltransferase.